A 550-amino-acid chain; its full sequence is Glucose-6-phosphate isomerase 1 (550 aa).

Residue glutamate 355 is the Proton donor of the active site. Active-site residues include histidine 386 and lysine 512.

The protein belongs to the GPI family.

Its subcellular location is the cytoplasm. The enzyme catalyses alpha-D-glucose 6-phosphate = beta-D-fructose 6-phosphate. The protein operates within carbohydrate biosynthesis; gluconeogenesis. It participates in carbohydrate degradation; glycolysis; D-glyceraldehyde 3-phosphate and glycerone phosphate from D-glucose: step 2/4. Functionally, catalyzes the reversible isomerization of glucose-6-phosphate to fructose-6-phosphate. The chain is Glucose-6-phosphate isomerase 1 from Rhodococcus jostii (strain RHA1).